The following is a 280-amino-acid chain: Energy-coupling factor transporter ATP-binding protein EcfA2 (280 aa).

The 243-residue stretch at 3–245 folds into the ABC transporter domain; it reads INLQNVSYTY…VSLLEKKQLG (243 aa). Residue 40–47 participates in ATP binding; sequence GHTGSGKS.

Belongs to the ABC transporter superfamily. Energy-coupling factor EcfA family. As to quaternary structure, forms a stable energy-coupling factor (ECF) transporter complex composed of 2 membrane-embedded substrate-binding proteins (S component), 2 ATP-binding proteins (A component) and 2 transmembrane proteins (T component).

The protein localises to the cell membrane. ATP-binding (A) component of a common energy-coupling factor (ECF) ABC-transporter complex. Unlike classic ABC transporters this ECF transporter provides the energy necessary to transport a number of different substrates. This chain is Energy-coupling factor transporter ATP-binding protein EcfA2, found in Streptococcus pyogenes serotype M1.